The following is a 275-amino-acid chain: MGLRKYKPATPGVRFMIRNDFSGLTKKEPEKSLLVPLKKTGGRNHYGRITVRFRGGGHKRQYRLIDFKRDKIGIPAKVSAIEYDPNRSARIALLVYADGEKRYILAPNGLQVGDTVLSGIDAEIRVGNALPLENIPLGTLLHNVEIRPGSGGKIARSAGVSCQLMAKEGNYALLRMPSGELRKVHIKCYATIGVVGNEDHKNEVFGKAGRTRWIGRKPHVRGMVMNPVDHPMGGGEGRGKGQHPVTPWGMPTKGYKTRRGRRASDKFIVRRRNQV.

The tract at residues Glu236 to Ala263 is disordered.

Belongs to the universal ribosomal protein uL2 family. As to quaternary structure, part of the 50S ribosomal subunit. Forms a bridge to the 30S subunit in the 70S ribosome.

In terms of biological role, one of the primary rRNA binding proteins. Required for association of the 30S and 50S subunits to form the 70S ribosome, for tRNA binding and peptide bond formation. It has been suggested to have peptidyltransferase activity; this is somewhat controversial. Makes several contacts with the 16S rRNA in the 70S ribosome. This Pseudothermotoga lettingae (strain ATCC BAA-301 / DSM 14385 / NBRC 107922 / TMO) (Thermotoga lettingae) protein is Large ribosomal subunit protein uL2.